Consider the following 431-residue polypeptide: Enolase (431 aa).

Residue Gln-168 participates in (2R)-2-phosphoglycerate binding. Glu-210 (proton donor) is an active-site residue. 3 residues coordinate Mg(2+): Asp-247, Glu-291, and Asp-318. (2R)-2-phosphoglycerate is bound by residues Lys-343, Arg-372, Ser-373, and Lys-394. Lys-343 (proton acceptor) is an active-site residue.

This sequence belongs to the enolase family. Component of the RNA degradosome, a multiprotein complex involved in RNA processing and mRNA degradation. Requires Mg(2+) as cofactor.

The protein resides in the cytoplasm. It is found in the secreted. The protein localises to the cell surface. It carries out the reaction (2R)-2-phosphoglycerate = phosphoenolpyruvate + H2O. It participates in carbohydrate degradation; glycolysis; pyruvate from D-glyceraldehyde 3-phosphate: step 4/5. Its function is as follows. Catalyzes the reversible conversion of 2-phosphoglycerate (2-PG) into phosphoenolpyruvate (PEP). It is essential for the degradation of carbohydrates via glycolysis. The chain is Enolase from Acinetobacter baylyi (strain ATCC 33305 / BD413 / ADP1).